The following is a 104-amino-acid chain: Disrupted in renal carcinoma protein 1 (104 aa).

Residues 1–23 (MPEAHMQPAKLQTSLPTTDHGSK) are disordered. The segment covering 10 to 19 (KLQTSLPTTD) has biased composition (polar residues).

In terms of tissue distribution, expressed at low steady-state level in adult placenta, testis, ovary, prostate, fetal kidney, spleen and skeletal muscle.

The protein is Disrupted in renal carcinoma protein 1 (DIRC1) of Homo sapiens (Human).